A 205-amino-acid chain; its full sequence is MANAIYDRTIAFAGICQAVALVQQVAKNGYCDSDAFETSLKAITCTNPSNTLEVFGHESQLKLGLECLVKGIDSTPSGSEITRYLISLMALERKLSGRRDAMSQLGDRIQMIERQLDHFDLFDDQMISNLASIYLDVISPIGPRIQVTGTPAVLQQTANQHKVRALLLSGIRCAVLWRQVGGRRRHLIFGRKKMIEQAQILLARI.

It belongs to the HflD family.

It is found in the cytoplasm. The protein localises to the cell inner membrane. The chain is High frequency lysogenization protein HflD homolog from Vibrio cholerae serotype O1 (strain ATCC 39541 / Classical Ogawa 395 / O395).